The sequence spans 430 residues: Enolase (430 aa).

Residue glutamine 167 participates in (2R)-2-phosphoglycerate binding. Glutamate 209 (proton donor) is an active-site residue. Residues aspartate 245, glutamate 286, and aspartate 313 each contribute to the Mg(2+) site. Residues lysine 338, arginine 367, serine 368, and lysine 389 each contribute to the (2R)-2-phosphoglycerate site. The active-site Proton acceptor is the lysine 338.

This sequence belongs to the enolase family. Requires Mg(2+) as cofactor.

The protein resides in the cytoplasm. It is found in the secreted. It localises to the cell surface. The catalysed reaction is (2R)-2-phosphoglycerate = phosphoenolpyruvate + H2O. Its pathway is carbohydrate degradation; glycolysis; pyruvate from D-glyceraldehyde 3-phosphate: step 4/5. Its function is as follows. Catalyzes the reversible conversion of 2-phosphoglycerate (2-PG) into phosphoenolpyruvate (PEP). It is essential for the degradation of carbohydrates via glycolysis. The polypeptide is Enolase (Synechococcus sp. (strain CC9902)).